Consider the following 391-residue polypeptide: 3-ketoacyl-CoA thiolase (391 aa).

C95 (acyl-thioester intermediate) is an active-site residue. Residues H347 and C377 each act as proton acceptor in the active site.

This sequence belongs to the thiolase-like superfamily. Thiolase family. In terms of assembly, heterotetramer of two alpha chains (FadB) and two beta chains (FadA).

It is found in the cytoplasm. It catalyses the reaction an acyl-CoA + acetyl-CoA = a 3-oxoacyl-CoA + CoA. It participates in lipid metabolism; fatty acid beta-oxidation. Catalyzes the final step of fatty acid oxidation in which acetyl-CoA is released and the CoA ester of a fatty acid two carbons shorter is formed. The protein is 3-ketoacyl-CoA thiolase of Pseudomonas putida (strain ATCC 700007 / DSM 6899 / JCM 31910 / BCRC 17059 / LMG 24140 / F1).